Here is a 462-residue protein sequence, read N- to C-terminus: Glycine--tRNA ligase (462 aa).

Substrate is bound by residues Arg-100 and Glu-174. ATP-binding positions include Arg-206 to Glu-208, Phe-216 to Phe-221, Glu-290 to Leu-291, and Gly-334 to Arg-337. Phe-221–Glu-225 lines the substrate pocket. Glu-330–Gly-334 is a substrate binding site.

This sequence belongs to the class-II aminoacyl-tRNA synthetase family. As to quaternary structure, homodimer.

Its subcellular location is the cytoplasm. It catalyses the reaction tRNA(Gly) + glycine + ATP = glycyl-tRNA(Gly) + AMP + diphosphate. Functionally, catalyzes the attachment of glycine to tRNA(Gly). This chain is Glycine--tRNA ligase, found in Alkaliphilus metalliredigens (strain QYMF).